We begin with the raw amino-acid sequence, 99 residues long: Putative GIY-YIG domain-containing protein 242L (99 aa).

One can recognise a GIY-YIG domain in the interval 5-81; that stretch reads NGWNIYMVTM…KKQTKKVKLQ (77 aa).

In Invertebrate iridescent virus 6 (IIV-6), this protein is Putative GIY-YIG domain-containing protein 242L.